The sequence spans 456 residues: UDP-N-acetylmuramate--L-alanine ligase (456 aa).

Residue 118–124 participates in ATP binding; the sequence is GTHGKST.

This sequence belongs to the MurCDEF family.

It is found in the cytoplasm. It carries out the reaction UDP-N-acetyl-alpha-D-muramate + L-alanine + ATP = UDP-N-acetyl-alpha-D-muramoyl-L-alanine + ADP + phosphate + H(+). Its pathway is cell wall biogenesis; peptidoglycan biosynthesis. Its function is as follows. Cell wall formation. The protein is UDP-N-acetylmuramate--L-alanine ligase of Paenarthrobacter aurescens (strain TC1).